The following is a 562-amino-acid chain: Protein wntless (562 aa).

Residues 1–13 (MSGTILENLSGRK) are Cytoplasmic-facing. A helical transmembrane segment spans residues 14-34 (LSILVSSLLLCQVACFLIGGL). At 35 to 239 (YAPVPAGHQI…AIHQNGGFTQ (205 aa)) the chain is on the lumenal side. Residues Asn58 and Asn103 are each glycosylated (N-linked (GlcNAc...) asparagine). A helical transmembrane segment spans residues 240 to 260 (VWLLLKSVLFPFIIGIMVWFW). The Cytoplasmic segment spans residues 261-270 (RRVHILQRSP). The chain crosses the membrane as a helical span at residues 271-291 (ALLEYMLLYLGGALSFLNLPL). Over 292-311 (EYLTLSFEMPYMLLLSDVRQ) the chain is Lumenal. The helical transmembrane segment at 312-332 (GIFYAMLLSFWLVFAGEHMLI) threads the bilayer. At 333-344 (QDSPNKSTIRSR) the chain is on the cytoplasmic side. The chain crosses the membrane as a helical span at residues 345 to 365 (YWKHLSAVVVGCISLFVFDIC). The Lumenal portion of the chain corresponds to 366–390 (ERGMQLRNPFYSIWTTPLGAKVAMS). A helical membrane pass occupies residues 391-411 (FIVLAGVSAGIYFLFLCYMVW). Over 412 to 441 (KVFKDIGDKRTSLPSMSQARRLHYEGLIYR) the chain is Cytoplasmic. The helical transmembrane segment at 442–462 (FKFLMLATLLCAGLTVAGFIM) threads the bilayer. The Lumenal segment spans residues 463–482 (GQMAEGHWKWNEDIEIQLTS). The helical transmembrane segment at 483 to 503 (AFLTGVYGMWNIYIFALLILY) threads the bilayer. Residues 504–562 (APSHKQWPTMRHSDETTQSNENIVASAASEEIEFSNLPSDSNPSEISSLTSFTRKVAFD) are Cytoplasmic-facing. A disordered region spans residues 538-562 (SNLPSDSNPSEISSLTSFTRKVAFD). Positions 539–556 (NLPSDSNPSEISSLTSFT) are enriched in polar residues.

Belongs to the wntless family. In terms of assembly, interacts with wg; in the Golgi. Interacts with Vps35, a component of the retromer complex; wls stability is regulated by Vps35.

Its subcellular location is the presynaptic cell membrane. The protein resides in the postsynaptic cell membrane. It is found in the cell membrane. It localises to the endoplasmic reticulum membrane. The protein localises to the endosome membrane. Its subcellular location is the golgi apparatus membrane. A segment polarity gene required for wingless (wg)-dependent patterning processes, acting in both wg-sending cells and wg-target cells. In non-neuronal cells wls directs wg secretion. The wls traffic loop encompasses the Golgi, the cell surface, an endocytic compartment and a retrograde route leading back to the Golgi, and involves clathrin-mediated endocytosis and the retromer complex (a conserved protein complex consisting of Vps35 and Vps26). In neuronal cells (the larval motorneuron NMJ), the wg signal moves across the synapse via the release of wls-containing exosome-like vesicles. Postsynaptic wls is required for the trafficking of fz2 through the fz2-interacting protein Grip. The sequence is that of Protein wntless from Drosophila mojavensis (Fruit fly).